The following is a 132-amino-acid chain: Fluoride-specific ion channel FluC (132 aa).

4 consecutive transmembrane segments (helical) span residues 6–26 (VLQLIAVGFGGALGAMARFIV), 41–61 (GTLVVNSLGSFAIGLIMILMI), 73–93 (FLIVGFLGAFTTFSTFSFETY), and 104–124 (AMLNIGVSVLTGLFAVWLGIW). G80 and T83 together coordinate Na(+).

Belongs to the fluoride channel Fluc/FEX (TC 1.A.43) family.

The protein resides in the cell inner membrane. The catalysed reaction is fluoride(in) = fluoride(out). Its activity is regulated as follows. Na(+) is not transported, but it plays an essential structural role and its presence is essential for fluoride channel function. Functionally, fluoride-specific ion channel. Important for reducing fluoride concentration in the cell, thus reducing its toxicity. The polypeptide is Fluoride-specific ion channel FluC (Hydrogenovibrio crunogenus (strain DSM 25203 / XCL-2) (Thiomicrospira crunogena)).